We begin with the raw amino-acid sequence, 426 residues long: Bone morphogenetic protein 7 (426 aa).

Residues 1 to 22 (MNALTVKRRLPVLLFLFHISLS) form the signal peptide. Positions 23-282 (SISSNTILEN…TSDIHLRSVR (260 aa)) are excised as a propeptide. N-linked (GlcNAc...) asparagine glycans are attached at residues Asn177, Asn307, and Asn367. Intrachain disulfides connect Cys325/Cys391, Cys354/Cys423, and Cys358/Cys425.

Belongs to the TGF-beta family. In terms of assembly, homodimer; disulfide-linked. Interacts with twsg1.

It localises to the secreted. In terms of biological role, growth factor of the TGF-beta superfamily that plays important role in various biological processes, including embryogenesis, hematopoiesis, neurogenesis and skeletal morphogenesis. Initiates the canonical BMP signaling cascade by associating with type I receptor ACVR1 and type II receptor ACVR2A. Once all three components are bound together in a complex at the cell surface, ACVR2A phosphorylates and activates ACVR1. In turn, ACVR1 propagates signal by phosphorylating SMAD1/5/8 that travel to the nucleus and act as activators and repressors of transcription of target genes. This Xenopus laevis (African clawed frog) protein is Bone morphogenetic protein 7 (bmp7).